A 406-amino-acid chain; its full sequence is Tryptophan 2,3-dioxygenase A (406 aa).

Residues 71–75 (FIVTH) and Arg143 each bind substrate. Residue His327 participates in heme binding. Residue Thr341 coordinates substrate.

This sequence belongs to the tryptophan 2,3-dioxygenase family. Homotetramer. Dimer of dimers. The cofactor is heme.

The catalysed reaction is L-tryptophan + O2 = N-formyl-L-kynurenine. It participates in amino-acid degradation; L-tryptophan degradation via kynurenine pathway; L-kynurenine from L-tryptophan: step 1/2. Heme-dependent dioxygenase that catalyzes the oxidative cleavage of the L-tryptophan (L-Trp) pyrrole ring and converts L-tryptophan to N-formyl-L-kynurenine. Catalyzes the oxidative cleavage of the indole moiety. This is Tryptophan 2,3-dioxygenase A from Danio rerio (Zebrafish).